The sequence spans 508 residues: Lysine--tRNA ligase (508 aa).

The Mg(2+) site is built by Glu416 and Glu423.

The protein belongs to the class-II aminoacyl-tRNA synthetase family. Homodimer. Requires Mg(2+) as cofactor.

The protein localises to the cytoplasm. It carries out the reaction tRNA(Lys) + L-lysine + ATP = L-lysyl-tRNA(Lys) + AMP + diphosphate. The protein is Lysine--tRNA ligase of Prochlorococcus marinus (strain MIT 9303).